The chain runs to 485 residues: ATP synthase subunit beta 2 (485 aa).

Residues methionine 1–glutamine 10 are compositionally biased toward basic and acidic residues. Residues methionine 1 to alanine 27 are disordered. The segment covering isoleucine 11–glutamate 24 has biased composition (polar residues). Residue glycine 177–threonine 184 participates in ATP binding.

This sequence belongs to the ATPase alpha/beta chains family. As to quaternary structure, F-type ATPases have 2 components, CF(1) - the catalytic core - and CF(0) - the membrane proton channel. CF(1) has five subunits: alpha(3), beta(3), gamma(1), delta(1), epsilon(1). CF(0) has three main subunits: a(1), b(2) and c(9-12). The alpha and beta chains form an alternating ring which encloses part of the gamma chain. CF(1) is attached to CF(0) by a central stalk formed by the gamma and epsilon chains, while a peripheral stalk is formed by the delta and b chains.

It localises to the cell inner membrane. It catalyses the reaction ATP + H2O + 4 H(+)(in) = ADP + phosphate + 5 H(+)(out). Its function is as follows. Produces ATP from ADP in the presence of a proton gradient across the membrane. The catalytic sites are hosted primarily by the beta subunits. The sequence is that of ATP synthase subunit beta 2 from Nitrosomonas eutropha (strain DSM 101675 / C91 / Nm57).